Here is a 161-residue protein sequence, read N- to C-terminus: Globin CTT-VIIB-8 (161 aa).

The first 16 residues, 1-16 (MKFFAVLALCIVGAIA), serve as a signal peptide directing secretion. The Globin domain occupies 18–161 (PLTADEASLV…NTYAIVVPRL (144 aa)). Histidine 76 and histidine 111 together coordinate heme b.

It belongs to the globin family. As to quaternary structure, homodimer.

In Chironomus thummi thummi (Midge), this protein is Globin CTT-VIIB-8 (CTT-7B8).